The primary structure comprises 133 residues: ATP synthase epsilon chain, chloroplastic (133 aa).

This sequence belongs to the ATPase epsilon chain family. In terms of assembly, F-type ATPases have 2 components, CF(1) - the catalytic core - and CF(0) - the membrane proton channel. CF(1) has five subunits: alpha(3), beta(3), gamma(1), delta(1), epsilon(1). CF(0) has three main subunits: a, b and c.

Its subcellular location is the plastid. It is found in the chloroplast thylakoid membrane. Its function is as follows. Produces ATP from ADP in the presence of a proton gradient across the membrane. This chain is ATP synthase epsilon chain, chloroplastic, found in Nephroselmis olivacea (Green alga).